The sequence spans 268 residues: MSVVISDAWRQRFGGTARLYGEKALQLFADAHICVVGIGGVGSWAAEALARTGIGAITLIDMDDVCVTNTNRQIHALRDNVGLAKAEVMAERIRQINPECRVTVVDDFVTPDNVAQYMSVGYSYVIDAIDSVRPKAALIAYCRRNKIPLVTTGGAGGQIDPTQIQVTDLAKTIQDPLAAKLRERLKSDFGVVKNSKGKLGVDCVFSTEALVYPQSDGTVCAMKATAEGPKRMDCASGFGAATMVTATFGFVAVSHALKKMMAKAARQG.

The chain crosses the membrane as a helical span at residues 237–257; the sequence is GFGAATMVTATFGFVAVSHAL.

It belongs to the HesA/MoeB/ThiF family. As to quaternary structure, interacts with CsdE.

The protein resides in the membrane. In terms of biological role, catalyzes the ATP-dependent dehydration of threonylcarbamoyladenosine at position 37 (t(6)A37) to form cyclic t(6)A37 (ct(6)A37) in tRNAs that read codons beginning with adenine. TcdA is also part of a sulfur transfer pathway; is able to accept sulfur from CsdA directly in vitro, but CsdE might act as the sulfur donor in vivo. The sequence is that of tRNA threonylcarbamoyladenosine dehydratase (tcdA) from Escherichia coli (strain K12).